The chain runs to 218 residues: Cytochrome b6 (218 aa).

A helical transmembrane segment spans residues 35–55 (IFYCLGGITLVCFLIQFATGF). C38 is a heme c binding site. Residues H89 and H103 each coordinate heme b. The next 3 membrane-spanning stretches (helical) occupy residues 93 to 113 (ASMM…TGGF), 119 to 139 (LTWV…VTGY), and 189 to 209 (LHTF…FLMI). The heme b site is built by H190 and H205.

Belongs to the cytochrome b family. PetB subfamily. As to quaternary structure, the 4 large subunits of the cytochrome b6-f complex are cytochrome b6, subunit IV (17 kDa polypeptide, PetD), cytochrome f and the Rieske protein, while the 4 small subunits are PetG, PetL, PetM and PetN. The complex functions as a dimer. The cofactor is heme b. Heme c is required as a cofactor.

The protein localises to the cellular thylakoid membrane. Component of the cytochrome b6-f complex, which mediates electron transfer between photosystem II (PSII) and photosystem I (PSI), cyclic electron flow around PSI, and state transitions. In Prochlorococcus marinus (strain SARG / CCMP1375 / SS120), this protein is Cytochrome b6.